Here is a 275-residue protein sequence, read N- to C-terminus: Glutamate racemase (275 aa).

Residues 22-23 (DS) and 54-55 (YG) each bind substrate. The Proton donor/acceptor role is filled by C85. 86–87 (NT) contributes to the substrate binding site. The active-site Proton donor/acceptor is the C196. Residue 197–198 (TH) participates in substrate binding.

It belongs to the aspartate/glutamate racemases family.

It carries out the reaction L-glutamate = D-glutamate. It functions in the pathway cell wall biogenesis; peptidoglycan biosynthesis. Its function is as follows. Provides the (R)-glutamate required for cell wall biosynthesis. The polypeptide is Glutamate racemase (Pseudomonas syringae pv. tomato (strain ATCC BAA-871 / DC3000)).